The primary structure comprises 476 residues: Major facilitator superfamily domain-containing protein 12 (476 aa).

M1 is modified (N-acetylmethionine). Over 1 to 25 the chain is Cytoplasmic; it reads MSPPSDDAGPGPPRTLSLAARLSFA. Residues 26 to 46 traverse the membrane as a helical segment; sequence VGHFLNDLCAGMWFTYLLLFL. Residues 47-55 are Lumenal-facing; sequence HSVRGYSSR. Residues 56-76 form a helical membrane-spanning segment; the sequence is GAGLLLLLGQVADGLCTPLVG. Over 77–94 the chain is Cytoplasmic; it reads YEADRASCVRCGPRKAWH. The helical transmembrane segment at 95–115 threads the bilayer; that stretch reads LAGTVCVLLSFPFIFSPCLGC. At 116–121 the chain is on the lumenal side; sequence GEATPE. The helical transmembrane segment at 122–142 threads the bilayer; the sequence is WAALLYYGPFIVVFQFGWAAT. The Cytoplasmic portion of the chain corresponds to 143–167; that stretch reads QIAHLSLIPELVTSDHEKVELTALR. Residues 168–188 traverse the membrane as a helical segment; that stretch reads YAFTVVANITVYGAAWLLLHL. The Lumenal portion of the chain corresponds to 189–213; it reads QGSAHGEQDISVGDQLGVQDVPVFR. A helical membrane pass occupies residues 214-234; the sequence is NLALLVVGVGAIFSLLFHLGT. Over 235 to 284 the chain is Cytoplasmic; it reads KEGHRSQHWGNEPNEHTPLVAPAAQPLLLWKHWLREPAFYQVGMLYMTTR. Residue T251 is modified to Phosphothreonine. The chain crosses the membrane as a helical span at residues 285–305; that stretch reads LIVNLSQTYIAMYLTYSLSLP. A topological domain (lumenal) is located at residue K306. The chain crosses the membrane as a helical span at residues 307–327; the sequence is KFIATIPLVMYLSGFFSSFLM. Residues 328-343 lie on the Cytoplasmic side of the membrane; that stretch reads KPVNRRIGRNMTYFTG. The next 2 helical transmembrane spans lie at 344–364 and 365–385; these read LLVILAFAAWVALADNLGVAV and YGAAVLLGAGCATILVTSLAM. At 386 to 398 the chain is on the cytoplasmic side; the sequence is TADLIGPHTHSGA. The chain crosses the membrane as a helical span at residues 399–419; it reads FVYGAMSFSDKVANGLAVMAV. The Lumenal segment spans residues 420–444; sequence QSLHPCPSELCCGACISFYHWVMTA. Residues 445–465 form a helical membrane-spanning segment; sequence VTGGVGVAAALALCSLLIWPI. Over 466–476 the chain is Cytoplasmic; the sequence is RIRNRDPRDRP.

It belongs to the major facilitator superfamily. In terms of processing, phosphorylation at Thr-251 by MTOR via mTORC1 pathway promotes cysteine transport in lysosomes, thereby regulating lysosomal cysteine and cystine storage and redox homeostasis.

It localises to the melanosome membrane. The protein localises to the lysosome membrane. The catalysed reaction is L-cysteine(in) = L-cysteine(out). Functionally, transporter that mediates the import of cysteine into melanosomes, thereby regulating skin/hair pigmentation. In melanosomes, cysteine import is required both for normal levels of cystine, the oxidized dimer of cysteine, and provide cysteine for the production of the cysteinyldopas used in pheomelanin synthesis, thereby regulating skin/hair pigmentation. Also catalyzes import of cysteine into lysosomes in non-pigmented cells, regulating lysosomal cystine and cysteine storage, which is essnetial for redox homeostasis. This chain is Major facilitator superfamily domain-containing protein 12, found in Mus musculus (Mouse).